The chain runs to 325 residues: Undecaprenyl-phosphate 4-deoxy-4-formamido-L-arabinose transferase (325 aa).

The next 2 helical transmembrane spans lie at 234–254 (LLSVIGSVIALMGFAFSLLLI) and 269–289 (VFMLFAVLFIFIGAQFVGMGL).

This sequence belongs to the glycosyltransferase 2 family.

The protein resides in the cell inner membrane. It catalyses the reaction UDP-4-deoxy-4-formamido-beta-L-arabinose + di-trans,octa-cis-undecaprenyl phosphate = 4-deoxy-4-formamido-alpha-L-arabinopyranosyl di-trans,octa-cis-undecaprenyl phosphate + UDP. It functions in the pathway glycolipid biosynthesis; 4-amino-4-deoxy-alpha-L-arabinose undecaprenyl phosphate biosynthesis; 4-amino-4-deoxy-alpha-L-arabinose undecaprenyl phosphate from UDP-4-deoxy-4-formamido-beta-L-arabinose and undecaprenyl phosphate: step 1/2. It participates in bacterial outer membrane biogenesis; lipopolysaccharide biosynthesis. Functionally, catalyzes the transfer of 4-deoxy-4-formamido-L-arabinose from UDP to undecaprenyl phosphate. The modified arabinose is attached to lipid A and is required for resistance to polymyxin and cationic antimicrobial peptides. The protein is Undecaprenyl-phosphate 4-deoxy-4-formamido-L-arabinose transferase of Erwinia tasmaniensis (strain DSM 17950 / CFBP 7177 / CIP 109463 / NCPPB 4357 / Et1/99).